The primary structure comprises 256 residues: Pimeloyl-[acyl-carrier protein] methyl ester esterase (256 aa).

One can recognise an AB hydrolase-1 domain in the interval 15–242; it reads HLVLLHGWGL…AAHAPFISHP (228 aa). Residues Trp22, 82–83, and 143–147 each bind substrate; these read SL and FLALQ. Catalysis depends on Ser82, which acts as the Nucleophile. Catalysis depends on residues Asp207 and His235. His235 is a substrate binding site.

It belongs to the AB hydrolase superfamily. Carboxylesterase BioH family. In terms of assembly, monomer.

Its subcellular location is the cytoplasm. It catalyses the reaction 6-carboxyhexanoyl-[ACP] methyl ester + H2O = 6-carboxyhexanoyl-[ACP] + methanol + H(+). It participates in cofactor biosynthesis; biotin biosynthesis. Its function is as follows. The physiological role of BioH is to remove the methyl group introduced by BioC when the pimeloyl moiety is complete. It allows to synthesize pimeloyl-ACP via the fatty acid synthetic pathway through the hydrolysis of the ester bonds of pimeloyl-ACP esters. The sequence is that of Pimeloyl-[acyl-carrier protein] methyl ester esterase from Salmonella agona (strain SL483).